A 240-amino-acid chain; its full sequence is Ribonuclease PH (240 aa).

Residues R87 and 125–127 (GTR) each bind phosphate.

The protein belongs to the RNase PH family. As to quaternary structure, homohexameric ring arranged as a trimer of dimers.

The enzyme catalyses tRNA(n+1) + phosphate = tRNA(n) + a ribonucleoside 5'-diphosphate. Functionally, phosphorolytic 3'-5' exoribonuclease that plays an important role in tRNA 3'-end maturation. Removes nucleotide residues following the 3'-CCA terminus of tRNAs; can also add nucleotides to the ends of RNA molecules by using nucleoside diphosphates as substrates, but this may not be physiologically important. Probably plays a role in initiation of 16S rRNA degradation (leading to ribosome degradation) during starvation. The polypeptide is Ribonuclease PH (Dictyoglomus turgidum (strain DSM 6724 / Z-1310)).